The sequence spans 420 residues: UDP-N-acetylglucosamine 1-carboxyvinyltransferase (420 aa).

Residue 22–23 (KN) participates in phosphoenolpyruvate binding. Arg93 is a binding site for UDP-N-acetyl-alpha-D-glucosamine. Cys117 serves as the catalytic Proton donor. Cys117 carries the post-translational modification 2-(S-cysteinyl)pyruvic acid O-phosphothioketal. UDP-N-acetyl-alpha-D-glucosamine is bound by residues Asp307 and Ile329.

The protein belongs to the EPSP synthase family. MurA subfamily.

The protein resides in the cytoplasm. It catalyses the reaction phosphoenolpyruvate + UDP-N-acetyl-alpha-D-glucosamine = UDP-N-acetyl-3-O-(1-carboxyvinyl)-alpha-D-glucosamine + phosphate. It functions in the pathway cell wall biogenesis; peptidoglycan biosynthesis. Cell wall formation. Adds enolpyruvyl to UDP-N-acetylglucosamine. In Cellvibrio japonicus (strain Ueda107) (Pseudomonas fluorescens subsp. cellulosa), this protein is UDP-N-acetylglucosamine 1-carboxyvinyltransferase.